An 84-amino-acid chain; its full sequence is MKVSVLITLAVLGVMFLLTSAEERGSDQMDSPAWLKSMERIFQSEERECRWLFGGCEKDSDCCEHLGCRRTKPSWCGWDFTFGK.

The N-terminal stretch at 1-21 is a signal peptide; that stretch reads MKVSVLITLAVLGVMFLLTSA. The propeptide occupies 22 to 47; that stretch reads EERGSDQMDSPAWLKSMERIFQSEER. Disulfide bonds link Cys49–Cys63, Cys56–Cys68, and Cys62–Cys76.

This sequence belongs to the neurotoxin 10 (Hwtx-1) family. 05 (F4a) subfamily. As to expression, expressed by the venom gland.

The protein resides in the secreted. Probable ion channel inhibitor. This Chilobrachys guangxiensis (Chinese earth tiger tarantula) protein is U21-theraphotoxin-Cg1c.